The chain runs to 338 residues: UDP-N-acetylenolpyruvoylglucosamine reductase (338 aa).

Residues 17–188 (IAARTDWWID…MYVDYRLRLR (172 aa)) form the FAD-binding PCMH-type domain. Arginine 164 is a catalytic residue. Catalysis depends on serine 237, which acts as the Proton donor. Glutamate 333 is an active-site residue.

This sequence belongs to the MurB family. It depends on FAD as a cofactor.

It localises to the cytoplasm. It carries out the reaction UDP-N-acetyl-alpha-D-muramate + NADP(+) = UDP-N-acetyl-3-O-(1-carboxyvinyl)-alpha-D-glucosamine + NADPH + H(+). It functions in the pathway cell wall biogenesis; peptidoglycan biosynthesis. Functionally, cell wall formation. The sequence is that of UDP-N-acetylenolpyruvoylglucosamine reductase from Porphyromonas gingivalis (strain ATCC 33277 / DSM 20709 / CIP 103683 / JCM 12257 / NCTC 11834 / 2561).